The primary structure comprises 361 residues: D-alanine--D-alanine ligase (361 aa).

An ATP-grasp domain is found at 134–344 (KILAQRAGVP…YTDLITKLID (211 aa)). Residue 169-224 (ASQLGSDLFVKPSNQGSSVGVSHVTNEKEYKVALAEAFKYDDKVLVEETVHGTEVE) participates in ATP binding. The Mg(2+) site is built by D297, E311, and N313.

Belongs to the D-alanine--D-alanine ligase family. Requires Mg(2+) as cofactor. Mn(2+) is required as a cofactor.

Its subcellular location is the cytoplasm. The catalysed reaction is 2 D-alanine + ATP = D-alanyl-D-alanine + ADP + phosphate + H(+). It functions in the pathway cell wall biogenesis; peptidoglycan biosynthesis. Functionally, cell wall formation. In Lactobacillus johnsonii (strain CNCM I-12250 / La1 / NCC 533), this protein is D-alanine--D-alanine ligase.